A 398-amino-acid chain; its full sequence is uncharacterized protein (398 aa).

Positions 21 to 253 constitute a Radical SAM core domain; the sequence is TNFGPTNLII…WQLTSTSEPE (233 aa). Residues Cys-37, Cys-41, and Cys-44 each coordinate [4Fe-4S] cluster.

The protein belongs to the radical SAM superfamily. Anaerobic sulfatase-maturating enzyme family. It depends on [4Fe-4S] cluster as a cofactor.

This is an uncharacterized protein from Synechocystis sp. (strain ATCC 27184 / PCC 6803 / Kazusa).